The chain runs to 212 residues: Nucleoredoxin-like protein 1 (212 aa).

One can recognise a Thioredoxin domain in the interval 1–164; it reads MASLFSGRIL…AAEVLDRNFQ (164 aa). Residues 191 to 212 form a disordered region; the sequence is AARGGRDPGGGGGEEGGAGGLF. A compositionally biased stretch (gly residues) spans 197-212; it reads DPGGGGGEEGGAGGLF.

Belongs to the nucleoredoxin family. In terms of assembly, interacts with isoform 1 of BSG.

The protein localises to the cell projection. It localises to the cilium. The protein resides in the photoreceptor outer segment. Its function is as follows. Plays an important role in retinal cone photoreceptor survival. In association with glucose transporter SLC16A1/GLUT1 and BSG, promotes retinal cone survival by enhancing aerobic glycolysis and accelerating the entry of glucose into photoreceptors. May play a role in cone cell viability, slowing down cone degeneration, does not seem to play a role in degenerating rods. In Homo sapiens (Human), this protein is Nucleoredoxin-like protein 1 (NXNL1).